Consider the following 423-residue polypeptide: MQQIKFIDLFSGMSGIRKGFEQACRKQSVACECVFTSEIKPAALEVLKQNYPDEVPYGDITKIETGDIPDFDILLAGFPCQAFSFAGKRLGFEDTRGTLFFDVARILKAKKPKGFILENVEGLVTHDRKDSTQKIGRTLTVILETLEALGYYVSWKVLNAKEFGIPQNRKRIYLTGSLKSKPDLSFETSPSPKLKNILESGLPTESSPFIKKLLKKFPPSELYGKSVKDKRGGKNNIHSWDIELKGAVTEEEKQLLNILLKERRKKNGLQKIGIDWMDGMPLTKAQISTFYKHPDLQNILDSLTDKGYLVLEHPKQKIGGQRIKDESLPKGYNIVSGKKSFEINKILDPNDVAPTLFAMDMEHLFVVDNGGLRTLTGKEGLRLFGYPDDYPFDIPKKDRCDLLGNTVAVPVIKAVSERLLHTL.

Positions 4 to 423 (IKFIDLFSGM…AVSERLLHTL (420 aa)) constitute an SAM-dependent MTase C5-type domain. Residue Cys80 is part of the active site.

The protein belongs to the class I-like SAM-binding methyltransferase superfamily. C5-methyltransferase family.

The catalysed reaction is a 2'-deoxycytidine in DNA + S-adenosyl-L-methionine = a 5-methyl-2'-deoxycytidine in DNA + S-adenosyl-L-homocysteine + H(+). Its function is as follows. A methylase, recognizes the double-stranded sequence 5'-GGNNCC-3', methylates C-5 on both strands, and protects the DNA from cleavage by the NgoBV endonuclease. The chain is Type II methyltransferase M.NgoBV (ngoBVM) from Neisseria gonorrhoeae.